A 309-amino-acid chain; its full sequence is Ribonuclease H2 subunit B (309 aa).

Residue Ala2 is modified to N-acetylalanine. The residue at position 295 (Lys295) is an N6-acetyllysine. Ser296 is modified (phosphoserine).

The protein belongs to the RNase H2 subunit B family. In terms of assembly, the RNase H2 complex is a heterotrimer composed of the catalytic subunit RNASEH2A and the non-catalytic subunits RNASEH2B and RNASEH2C.

The protein resides in the nucleus. Functionally, non catalytic subunit of RNase H2, an endonuclease that specifically degrades the RNA of RNA:DNA hybrids. Participates in DNA replication, possibly by mediating the removal of lagging-strand Okazaki fragment RNA primers during DNA replication. Mediates the excision of single ribonucleotides from DNA:RNA duplexes. The protein is Ribonuclease H2 subunit B (RNASEH2B) of Bos taurus (Bovine).